Reading from the N-terminus, the 497-residue chain is Glycerol kinase (497 aa).

Thr-13 is a binding site for ADP. 3 residues coordinate ATP: Thr-13, Thr-14, and Ser-15. Thr-13 contributes to the sn-glycerol 3-phosphate binding site. Position 17 (Arg-17) interacts with ADP. Residues Arg-83, Glu-84, and Tyr-135 each coordinate sn-glycerol 3-phosphate. Glycerol contacts are provided by Arg-83, Glu-84, and Tyr-135. Residue His-231 is modified to Phosphohistidine; by HPr. A sn-glycerol 3-phosphate-binding site is contributed by Asp-245. Glycerol is bound by residues Asp-245 and Gln-246. 2 residues coordinate ADP: Thr-267 and Gly-310. 4 residues coordinate ATP: Thr-267, Gly-310, Gln-314, and Gly-411. Positions 411 and 415 each coordinate ADP.

The protein belongs to the FGGY kinase family. As to quaternary structure, homotetramer and homodimer (in equilibrium). The phosphoenolpyruvate-dependent sugar phosphotransferase system (PTS), including enzyme I, and histidine-containing protein (HPr) are required for the phosphorylation, which leads to the activation of the enzyme.

It carries out the reaction glycerol + ATP = sn-glycerol 3-phosphate + ADP + H(+). Its pathway is polyol metabolism; glycerol degradation via glycerol kinase pathway; sn-glycerol 3-phosphate from glycerol: step 1/1. Activated by phosphorylation and inhibited by fructose 1,6-bisphosphate (FBP). Its function is as follows. Key enzyme in the regulation of glycerol uptake and metabolism. Catalyzes the phosphorylation of glycerol to yield sn-glycerol 3-phosphate. This is Glycerol kinase from Listeria monocytogenes serotype 4b (strain F2365).